Consider the following 444-residue polypeptide: tRNA-2-methylthio-N(6)-dimethylallyladenosine synthase (444 aa).

The 115-residue stretch at 3 to 117 folds into the MTTase N-terminal domain; that stretch reads RGLYIESYGC…LPELIMKVKR (115 aa). [4Fe-4S] cluster contacts are provided by cysteine 12, cysteine 48, cysteine 80, cysteine 155, cysteine 159, and cysteine 162. The Radical SAM core domain maps to 141-374; the sequence is ANGGVSAYVS…LLTKQQLQFN (234 aa). A TRAM domain is found at 375-441; the sequence is KSMEGRVMDV…QNSLEGTVLS (67 aa).

It belongs to the methylthiotransferase family. MiaB subfamily. In terms of assembly, monomer. [4Fe-4S] cluster serves as cofactor.

The protein resides in the cytoplasm. It carries out the reaction N(6)-dimethylallyladenosine(37) in tRNA + (sulfur carrier)-SH + AH2 + 2 S-adenosyl-L-methionine = 2-methylsulfanyl-N(6)-dimethylallyladenosine(37) in tRNA + (sulfur carrier)-H + 5'-deoxyadenosine + L-methionine + A + S-adenosyl-L-homocysteine + 2 H(+). Functionally, catalyzes the methylthiolation of N6-(dimethylallyl)adenosine (i(6)A), leading to the formation of 2-methylthio-N6-(dimethylallyl)adenosine (ms(2)i(6)A) at position 37 in tRNAs that read codons beginning with uridine. This is tRNA-2-methylthio-N(6)-dimethylallyladenosine synthase from Anaplasma phagocytophilum (strain HZ).